The chain runs to 144 residues: Large ribosomal subunit protein uL15 (144 aa).

The segment at 1–62 (MELNNLKPAE…GQMPLQRRLP (62 aa)) is disordered. The segment covering 21-31 (RGIGSGLGKTA) has biased composition (gly residues).

Belongs to the universal ribosomal protein uL15 family. Part of the 50S ribosomal subunit.

Its function is as follows. Binds to the 23S rRNA. The chain is Large ribosomal subunit protein uL15 from Paraburkholderia phymatum (strain DSM 17167 / CIP 108236 / LMG 21445 / STM815) (Burkholderia phymatum).